Consider the following 534-residue polypeptide: Phosphoenolpyruvate carboxykinase (ATP) (534 aa).

Residues Arg60, Tyr195, and Lys201 each coordinate substrate. Residues Lys201, His221, and 237–245 (GLSGTGKTT) each bind ATP. Lys201 and His221 together coordinate Mn(2+). Asp258 contacts Mn(2+). Glu287, Arg324, and Thr449 together coordinate ATP. Arg324 provides a ligand contact to substrate.

This sequence belongs to the phosphoenolpyruvate carboxykinase (ATP) family. Mn(2+) serves as cofactor.

Its subcellular location is the cytoplasm. It catalyses the reaction oxaloacetate + ATP = phosphoenolpyruvate + ADP + CO2. It functions in the pathway carbohydrate biosynthesis; gluconeogenesis. In terms of biological role, involved in the gluconeogenesis. Catalyzes the conversion of oxaloacetate (OAA) to phosphoenolpyruvate (PEP) through direct phosphoryl transfer between the nucleoside triphosphate and OAA. This Flavobacterium johnsoniae (strain ATCC 17061 / DSM 2064 / JCM 8514 / BCRC 14874 / CCUG 350202 / NBRC 14942 / NCIMB 11054 / UW101) (Cytophaga johnsonae) protein is Phosphoenolpyruvate carboxykinase (ATP).